Here is a 367-residue protein sequence, read N- to C-terminus: Phospho-N-acetylmuramoyl-pentapeptide-transferase (367 aa).

Transmembrane regions (helical) follow at residues 13-33 (ISGI…ALTL), 49-69 (LPLL…VPLL), 95-115 (MGGI…SNFA), 119-139 (LAVS…DWQI), 154-174 (LALQ…NQPA), 183-203 (WVSF…FVLV), 215-235 (IDGL…AIVA), 237-257 (TSPA…GFLA), 281-301 (AVAL…IFFV), and 347-367 (VSSF…IAPF).

This sequence belongs to the glycosyltransferase 4 family. MraY subfamily. Mg(2+) serves as cofactor.

Its subcellular location is the cell inner membrane. The catalysed reaction is UDP-N-acetyl-alpha-D-muramoyl-L-alanyl-gamma-D-glutamyl-meso-2,6-diaminopimeloyl-D-alanyl-D-alanine + di-trans,octa-cis-undecaprenyl phosphate = di-trans,octa-cis-undecaprenyl diphospho-N-acetyl-alpha-D-muramoyl-L-alanyl-D-glutamyl-meso-2,6-diaminopimeloyl-D-alanyl-D-alanine + UMP. The protein operates within cell wall biogenesis; peptidoglycan biosynthesis. In terms of biological role, catalyzes the initial step of the lipid cycle reactions in the biosynthesis of the cell wall peptidoglycan: transfers peptidoglycan precursor phospho-MurNAc-pentapeptide from UDP-MurNAc-pentapeptide onto the lipid carrier undecaprenyl phosphate, yielding undecaprenyl-pyrophosphoryl-MurNAc-pentapeptide, known as lipid I. The sequence is that of Phospho-N-acetylmuramoyl-pentapeptide-transferase from Trichormus variabilis (strain ATCC 29413 / PCC 7937) (Anabaena variabilis).